We begin with the raw amino-acid sequence, 517 residues long: Crotonobetaine/carnitine--CoA ligase (517 aa).

It belongs to the ATP-dependent AMP-binding enzyme family.

The catalysed reaction is 4-(trimethylamino)butanoate + ATP + CoA = 4-(trimethylamino)butanoyl-CoA + AMP + diphosphate. It catalyses the reaction crotonobetaine + ATP + CoA = crotonobetainyl-CoA + AMP + diphosphate. It carries out the reaction (R)-carnitine + ATP + CoA = (R)-carnitinyl-CoA + AMP + diphosphate. It participates in amine and polyamine metabolism; carnitine metabolism. In terms of biological role, catalyzes the transfer of CoA to carnitine, generating the initial carnitinyl-CoA needed for the CaiB reaction cycle. Also has activity toward crotonobetaine and gamma-butyrobetaine. The chain is Crotonobetaine/carnitine--CoA ligase from Salmonella paratyphi C (strain RKS4594).